The primary structure comprises 102 residues: Circadian clock oscillator protein KaiA (102 aa).

Residues 1–102 (MTQEVDQQIL…CEAYRGAIFK (102 aa)) enclose the KaiA C-terminal domain.

Belongs to the KaiA family. In terms of assembly, homodimer. The KaiABC complex composition changes during the circadian cycle to control KaiC phosphorylation. Complexes KaiC(6), KaiA(2-4):KaiC(6), KaiB(6):KaiC(6) and KaiC(6):KaiB(6):KaiA(12) are among the most important forms, many form cooperatively. KaiA and CikA bind to the same region of the KaiB(fs) form and therefore compete.

In terms of biological role, key component of the KaiABC oscillator complex, which constitutes the main circadian regulator in cyanobacteria. Complex composition changes during the circadian cycle to control KaiC phosphorylation. KaiA stimulates KaiC autophosphorylation, while KaiB sequesters KaiA, leading to KaiC autodephosphorylation. KaiA binding to the KaiC CII domain during the subjective day yields KaiA(2-4):KaiC(6) complexes which stimulate KaiC autophosphorylation. Phospho-Ser-431 KaiC accumulation triggers binding of KaiB during the subjective night to form the KaiB(6):KaiC(6) complex, leading to changes in the output regulators CikA and SasA. KaiB(6):KaiC(6) formation exposes a site for KaiA binding on KaiB that sequesters KaiA from KaiC's CII domain, making the KaiC(6):KaiB(6):KaiA(12) complex resulting in KaiC autodephosphorylation. Complete dephosphorylation of KaiC leads to dissociation of KaiA(2):KaiB(1), completing 1 cycle of the Kai oscillator. In Nostoc sp. (strain PCC 7120 / SAG 25.82 / UTEX 2576), this protein is Circadian clock oscillator protein KaiA.